Consider the following 391-residue polypeptide: Chaperone protein DnaJ (391 aa).

The J domain occupies 2–67 (DYYDVLGVSK…QKRESYDRYG (66 aa)). The CR-type zinc finger occupies 148–226 (GVEKELLVSG…CRGQGRVKDK (79 aa)). Zn(2+) is bound by residues cysteine 161, cysteine 164, cysteine 178, cysteine 181, cysteine 200, cysteine 203, cysteine 214, and cysteine 217. 4 CXXCXGXG motif repeats span residues 161–168 (CTTCSGSG), 178–185 (CERCKGSG), 200–207 (CPECGGEG), and 214–221 (CSNCRGQG).

This sequence belongs to the DnaJ family. As to quaternary structure, homodimer. Zn(2+) is required as a cofactor.

The protein localises to the cytoplasm. Its function is as follows. Participates actively in the response to hyperosmotic and heat shock by preventing the aggregation of stress-denatured proteins and by disaggregating proteins, also in an autonomous, DnaK-independent fashion. Unfolded proteins bind initially to DnaJ; upon interaction with the DnaJ-bound protein, DnaK hydrolyzes its bound ATP, resulting in the formation of a stable complex. GrpE releases ADP from DnaK; ATP binding to DnaK triggers the release of the substrate protein, thus completing the reaction cycle. Several rounds of ATP-dependent interactions between DnaJ, DnaK and GrpE are required for fully efficient folding. Also involved, together with DnaK and GrpE, in the DNA replication of plasmids through activation of initiation proteins. The chain is Chaperone protein DnaJ from Chlamydia felis (strain Fe/C-56) (Chlamydophila felis).